The sequence spans 464 residues: UPF0210 protein Cgl1545/cg1743 (464 aa).

Belongs to the UPF0210 family. In terms of assembly, homodimer.

The chain is UPF0210 protein Cgl1545/cg1743 from Corynebacterium glutamicum (strain ATCC 13032 / DSM 20300 / JCM 1318 / BCRC 11384 / CCUG 27702 / LMG 3730 / NBRC 12168 / NCIMB 10025 / NRRL B-2784 / 534).